A 708-amino-acid polypeptide reads, in one-letter code: Large T antigen (708 aa).

Methionine 1 bears the N-acetylmethionine; by host mark. A J domain is found at 12–75; the sequence is QLMDLLGLER…VKYAHQPDFG (64 aa). Residues 63-89 are binding of LT to the CUL7 complex; that stretch reads EDGVKYAHQPDFGGFWDATEIPTYGTD. Positions 103 to 107 match the LXCXE motif motif; it reads LFCSE. Serine 106, serine 112, serine 120, and serine 123 each carry phosphoserine; by host. The segment at 109–134 is disordered; it reads MPSSDDEATADSQHSTPPKKKRKVED. The residue at position 124 (threonine 124) is a Phosphothreonine; by host. The Nuclear localization signal motif lies at 125–132; it reads PPKKKRKV. A DNA-binding region (T-ag OBD) is located at residues 139–254; sequence PSELLSFLSH…EESLPGGLKE (116 aa). The T-ag D1-type zinc-finger motif lies at 265–357; the sequence is TKQVSWKLVT…KRVDSLQLTR (93 aa). Residues cysteine 302, cysteine 305, histidine 313, and histidine 317 each contribute to the Zn(2+) site. The segment at 337–672 is binding to host TP53 protein; it reads CQQAVDTVLA…IDSQSQGSFQ (336 aa). The 161-residue stretch at 400 to 560 folds into the SF3 helicase domain; sequence KMDSVVYDFL…DYLKHCLERS (161 aa). The segment at 418–616 is ATPase activity; the sequence is KKRYWLFKGP…FSLSVYQKMK (199 aa). 426–433 serves as a coordination point for ATP; sequence GPIDSGKT. Residues 627 to 708 are C-terminal region; it reads DWLRNSDDDD…PPTPPPEPET (82 aa). Residues 630 to 685 are disordered; the sequence is RNSDDDDEDSQENADKNEDGGEKNMEDSGHETGIDSQSQGSFQAPQSSQSVHDHNQ. A Phosphoserine; by host modification is found at serine 639. Residues 642-662 show a composition bias toward basic and acidic residues; sequence NADKNEDGGEKNMEDSGHETG. Positions 663 to 679 are enriched in polar residues; that stretch reads IDSQSQGSFQAPQSSQS. Serine 676, serine 677, and serine 679 each carry phosphoserine; by host. Lysine 697 carries the post-translational modification N6-acetyllysine; by host. The interval 699–708 is CPD; sequence PPTPPPEPET. Threonine 701 is subject to Phosphothreonine; by host.

As to quaternary structure, isoform large T antigen forms homohexamers in the presence of ATP. Interacts with host HDAC1. Interacts (via LXCXE domain) with host RB1; the interaction induces the aberrant dissociation of RB1-E2F1 complex thereby disrupting RB1's activity. Interacts (via LXCXE domain) with host pRB-related proteins RBL1 and RBL2. Interacts (via C-terminus) with host TOP1 and POLA1 allowing DNA replication. Interacts with host TP53, inhibiting TP53 binding to DNA. Interacts with host preinitiation complex components TBP, TFIIA and TFIID to regulate transcription initiation. LT interacts (via CPD region) with host FBW7gamma isoform (via WD repeats); seems to function as a competitive inhibitor of FBW7gamma function for physiologic substrates. LT interacts with host E3 ubiquitin ligase CUL7; this interaction seems to inhibit CUL7. Component of a SCF(CUL7)-like complex composed of SV40 Lt and host proteins CUL7, SKP1, RBX1, and FBXW8. LT interacts with host BUB1; this interaction induces activation of a DNA damage response and promotes p53 stabilization and phosphorylation. Interacts with host FAM111A and this interaction is required for efficient viral replication and sustained viral gene expression in restrictive cell types. Mg(2+) serves as cofactor. Phosphorylated on both serine and threonine residues. Phosphorylation on Ser-120 and Ser-123 inhibits viral replication, while phosphorylation on Thr-124 enhances replication by activating the DNA-binding domain. Phosphorylation on Thr-701 is required for binding to host FBW7gamma isoform. Dephosphorylated preferentially by PP2A on Ser-120, Ser-123, Ser-677 and perhaps Ser-679. Small t antigen inhibits the dephosphorylation by the AC form of PP2A. In terms of processing, O-Glycosylated near the C-terminal region. Post-translationally, acetylated by CBP in a TP53-dependent manner.

It localises to the host nucleus. The catalysed reaction is Couples ATP hydrolysis with the unwinding of duplex DNA by translocating in the 3'-5' direction.. The enzyme catalyses ATP + H2O = ADP + phosphate + H(+). With respect to regulation, DNA helicase activity is inhibited by ATP-gamma-S. Its function is as follows. Isoform large T antigen is a key early protein essential for both driving viral replication and inducing cellular transformation. Plays a role in viral genome replication by driving entry of quiescent cells into the cell cycle and by autoregulating the synthesis of viral early mRNA. Displays highly oncogenic activities by corrupting the host cellular checkpoint mechanisms that guard cell division and the transcription, replication, and repair of DNA. Participates in the modulation of cellular gene expression preceeding viral DNA replication. This step involves binding to host key cell cycle regulators retinoblastoma protein RB1/pRb and TP53. Induces the disassembly of host E2F1 transcription factors from RB1, thus promoting transcriptional activation of E2F1-regulated S-phase genes. Inhibits host TP53 binding to DNA, abrogating the ability of TP53 to stimulate gene expression. Plays the role of a TFIID-associated factor (TAF) in transcription initiation for all three RNA polymerases, by stabilizing the TBP-TFIIA complex on promoters. Initiates viral DNA replication and unwinding via interactions with the viral origin of replication. Binds two adjacent sites in the SV40 origin. The replication fork movement is facilitated by Large T antigen helicase activity. Has processive 3'-5' DNA helicase activity which requires a short 3' single-stranded region and ATP; other (d)NTPs can partially replace ATP. Activates the transcription of viral late mRNA, through host TBP and TFIIA stabilization. Interferes with histone deacetylation mediated by HDAC1, leading to activation of transcription. May inactivate the growth-suppressing properties of the E3 ubiquitin ligase CUL7. In terms of biological role, isoform 17kT antigen targets host RBL2 for degradation and promotes cell proliferation. Transactivates host cyclin A promoter through its J domain. Functionally, unwinds G4 DNA (planar arrays of 4 guanine bases stabilized by hydrogen bonds, parallel and antiparallel arrays were tested); unwinding occurs in the 3'-5' direction, requires a 3' single-stranded end and hydrolyzable ATP. This chain is Large T antigen, found in Macaca (macaques).